Consider the following 504-residue polypeptide: MSFSVDVLANIAIELQRGIGHQDRFQRLITTLRQVLECDASALLRYDSRQFIPLAIDGLAKDVLGRRFALEGHPRLEAIARAGDVVRFPADSELPDPYDGLIPGQESLKVHACVGLPLFAGQNLIGALTLDGMQPDQFDVFSDEELRLIAALAAGALSNALLIEQLESQNMLPGDAAPFEAVKQTQMIGLSPGMTQLKKEIEIVAASDLNVLISGETGTGKELVAKAIHEASPRAVNPLVYLNCAALPESVAESELFGHVKGAFTGAISNRSGKFEMADNGTLFLDEIGELSLALQAKLLRVLQYGDIQRVGDDRSLRVDVRVLAATNRDLREEVLAGRFRADLFHRLSVFPLSVPPLRERGDDVILLAGYFCEQCRLRLGLSRVVLSAGARNLLQHYRFPGNVRELEHAIHRAVVLARATRSGDEVILEAQHFAFPEVTLPPPEAAAVPVVKQNLREATEAFQRETIRQALAQNHHNWAACARMLETDVANLHRLAKRLGLKD.

At aspartate 57 the chain carries 4-aspartylphosphate. One can recognise a Sigma-54 factor interaction domain in the interval 187-416 (MIGLSPGMTQ…LEHAIHRAVV (230 aa)). ATP-binding positions include 215 to 222 (GETGTGKE) and 278 to 287 (ADNGTLFLDE). A DNA-binding region (H-T-H motif) is located at residues 479-498 (WAACARMLETDVANLHRLAK).

It functions in the pathway nitrogen metabolism; nitric oxide reduction. Its function is as follows. Required for the expression of anaerobic nitric oxide (NO) reductase, acts as a transcriptional activator for at least the norVW operon. Activation also requires sigma-54. The sequence is that of Anaerobic nitric oxide reductase transcription regulator NorR from Escherichia coli O8 (strain IAI1).